Consider the following 247-residue polypeptide: RNA-free ribonuclease P (247 aa).

Positions 223 to 247 (SPEGEKEKGEADKKKKSHSEEAEFI) are disordered.

The protein belongs to the HARP family.

It catalyses the reaction Endonucleolytic cleavage of RNA, removing 5'-extranucleotides from tRNA precursor.. Functionally, RNA-free RNase P that catalyzes the removal of the 5'-leader sequence from pre-tRNA to produce the mature 5'-terminus. The protein is RNA-free ribonuclease P of Methanosarcina acetivorans (strain ATCC 35395 / DSM 2834 / JCM 12185 / C2A).